A 346-amino-acid polypeptide reads, in one-letter code: Isopentenyl-diphosphate delta-isomerase (346 aa).

Residue 12–13 coordinates substrate; the sequence is RK. FMN-binding positions include 67–69, Ser-97, and Asn-126; that span reads ALT. 97–99 lines the substrate pocket; the sequence is SQR. Gln-156 provides a ligand contact to substrate. Glu-157 is a Mg(2+) binding site. FMN-binding positions include Lys-188, Thr-218, 263-265, and 284-285; these read GIR and AG.

The protein belongs to the IPP isomerase type 2 family. In terms of assembly, homooctamer. Dimer of tetramers. It depends on FMN as a cofactor. NADPH serves as cofactor. Requires Mg(2+) as cofactor.

The protein resides in the cytoplasm. It carries out the reaction isopentenyl diphosphate = dimethylallyl diphosphate. Functionally, involved in the biosynthesis of isoprenoids. Catalyzes the 1,3-allylic rearrangement of the homoallylic substrate isopentenyl (IPP) to its allylic isomer, dimethylallyl diphosphate (DMAPP). This is Isopentenyl-diphosphate delta-isomerase from Moorella thermoacetica (strain ATCC 39073 / JCM 9320).